A 262-amino-acid polypeptide reads, in one-letter code: Indole-3-glycerol phosphate synthase (262 aa).

It belongs to the TrpC family.

It carries out the reaction 1-(2-carboxyphenylamino)-1-deoxy-D-ribulose 5-phosphate + H(+) = (1S,2R)-1-C-(indol-3-yl)glycerol 3-phosphate + CO2 + H2O. It functions in the pathway amino-acid biosynthesis; L-tryptophan biosynthesis; L-tryptophan from chorismate: step 4/5. The sequence is that of Indole-3-glycerol phosphate synthase from Bordetella pertussis (strain Tohama I / ATCC BAA-589 / NCTC 13251).